The primary structure comprises 717 residues: Radial spoke head protein 6 homolog A (717 aa).

4 disordered regions span residues 1–65 (MGDL…SLSQ), 503–523 (SEEE…YEEN), 563–588 (TEEE…QEVG), and 672–717 (GPEI…ETDD). 3 stretches are compositionally biased toward acidic residues: residues 503 to 513 (SEEEGDEEEEG), 564 to 585 (EEEE…EVEQ), and 700 to 717 (TEEE…ETDD).

It belongs to the flagellar radial spoke RSP4/6 family. As to quaternary structure, component of the axonemal radial spoke 1 (RS1) and 2 (RS2) complexes, at least composed of spoke head proteins RSPH1, RSPH3, RSPH9 and the cilia-specific component RSPH4A or sperm-specific component RSPH6A, spoke stalk proteins RSPH14, DNAJB13, DYDC1, ROPN1L and NME5, and the RS1 complex-specific anchor protein IQUB. Interacts with RSPH1. Interacts with RSPH3B. Interacts with RSPH4A. Interacts with RSPH9. Interacts with RSPH10B. Phosphorylated by PKA. Phosphorylation increases in capacitated sperm.

Its subcellular location is the cytoplasm. The protein resides in the cytoskeleton. The protein localises to the flagellum axoneme. Functions as part of radial spoke complexes in the axoneme of sperm flagella that play an important part in motility. The triple radial spokes (RS1, RS2 and RS3) are required to modulate beating of the sperm flagellum. In Homo sapiens (Human), this protein is Radial spoke head protein 6 homolog A.